Reading from the N-terminus, the 382-residue chain is Apolipoprotein A-IV (382 aa).

A signal peptide spans 1 to 20; that stretch reads MFLKAVVLTLSLVAVTGAQA. 13 repeat units span residues 33-54, 60-81, 82-103, 115-136, 137-158, 159-180, 181-202, 203-224, 225-246, 247-268, 269-286, 287-308, and 309-330. A 13 X 22 AA approximate tandem repeats region spans residues 33 to 330; the sequence is DYFSQLSNNA…QVEELRQKLG (298 aa).

This sequence belongs to the apolipoprotein A1/A4/E family. In terms of assembly, homodimer. Phosphorylation sites are present in the extracellular medium.

It localises to the secreted. Its function is as follows. May have a role in chylomicrons and VLDL secretion and catabolism. Required for efficient activation of lipoprotein lipase by ApoC-II; potent activator of LCAT. Apoa-IV is a major component of HDL and chylomicrons. The protein is Apolipoprotein A-IV (APOA4) of Mirounga angustirostris (Northern elephant seal).